The primary structure comprises 110 residues: Nucleoid-associated protein Mvan_5528 (110 aa).

The protein belongs to the YbaB/EbfC family. As to quaternary structure, homodimer.

It localises to the cytoplasm. The protein localises to the nucleoid. Its function is as follows. Binds to DNA and alters its conformation. May be involved in regulation of gene expression, nucleoid organization and DNA protection. In Mycolicibacterium vanbaalenii (strain DSM 7251 / JCM 13017 / BCRC 16820 / KCTC 9966 / NRRL B-24157 / PYR-1) (Mycobacterium vanbaalenii), this protein is Nucleoid-associated protein Mvan_5528.